A 132-amino-acid chain; its full sequence is Interleukin-13 (132 aa).

Residues 1 to 18 form the signal peptide; sequence MALLLTTVIALTCLGGFA. N-linked (GlcNAc...) asparagine glycosylation is found at Asn-38, Asn-49, Asn-57, and Asn-72. 2 disulfide bridges follow: Cys-48/Cys-76 and Cys-64/Cys-90.

This sequence belongs to the IL-4/IL-13 family. In terms of assembly, interacts with IL13RA2.

The protein localises to the secreted. Its function is as follows. Cytokine that plays important roles in allergic inflammation and immune response to parasite infection. Synergizes with IL2 in regulating interferon-gamma synthesis. Stimulates B-cell proliferation, and activation of eosinophils, basophils, and mast cells. Plays an important role in controlling IL33 activity by modulating the production of transmembrane and soluble forms of interleukin-1 receptor-like 1/IL1RL1. Displays the capacity to antagonize Th1-driven proinflammatory immune response and downregulates synthesis of many proinflammatory cytokines including IL1, IL6, IL10, IL12 and TNF-alpha through a mechanism that partially involves suppression of NF-kappa-B. Also functions on nonhematopoietic cells, including endothelial cells where it induces vascular cell adhesion protein 1/VCAM1, which is important in the recruitment of eosinophils. Exerts its biological effects through its receptors which comprises the IL4R chain and the IL13RA1 chain, to activate JAK1 and TYK2, leading to the activation of STAT6. Aside from IL13RA1, another receptor IL13RA2 acts as a high affinity decoy for IL13 and mediates internalization and depletion of extracellular IL13. This Pan troglodytes (Chimpanzee) protein is Interleukin-13 (IL13).